The sequence spans 287 residues: Ribosomal RNA-processing protein 8 (287 aa).

The disordered stretch occupies residues 1 to 62 (MTTEENKTSR…SAPSKRPKPS (62 aa)). Residues 9 to 21 (SRNRKRKRQRNPK) are compositionally biased toward basic residues. Residues 35–46 (QNEKKNQRDTKN) are compositionally biased toward basic and acidic residues. The S-adenosyl-L-methionine site is built by His-107, Gly-142, Asp-160, Asp-172, Met-173, and Cys-189.

Belongs to the methyltransferase superfamily. RRP8 family.

It localises to the nucleus. Its subcellular location is the nucleolus. Its function is as follows. Probable methyltransferase required to silence rDNA. The polypeptide is Ribosomal RNA-processing protein 8 (Arabidopsis thaliana (Mouse-ear cress)).